The sequence spans 77 residues: Large ribosomal subunit protein eL20 (77 aa).

This sequence belongs to the eukaryotic ribosomal protein eL20 family. In terms of assembly, part of the 50S ribosomal subunit. Binds 23S rRNA.

The sequence is that of Large ribosomal subunit protein eL20 from Thermococcus gammatolerans (strain DSM 15229 / JCM 11827 / EJ3).